The sequence spans 400 residues: Phosphoglycerate kinase (400 aa).

Residues 21-23 (DFN), R36, 59-62 (HCSR), R118, and R151 contribute to the substrate site. Residues K201, E323, and 353–356 (GGDT) each bind ATP.

It belongs to the phosphoglycerate kinase family. In terms of assembly, monomer.

Its subcellular location is the cytoplasm. It catalyses the reaction (2R)-3-phosphoglycerate + ATP = (2R)-3-phospho-glyceroyl phosphate + ADP. The protein operates within carbohydrate degradation; glycolysis; pyruvate from D-glyceraldehyde 3-phosphate: step 2/5. In Bartonella bacilliformis (strain ATCC 35685 / KC583 / Herrer 020/F12,63), this protein is Phosphoglycerate kinase.